The primary structure comprises 210 residues: N-(5'-phosphoribosyl)anthranilate isomerase (210 aa).

The protein belongs to the TrpF family.

It carries out the reaction N-(5-phospho-beta-D-ribosyl)anthranilate = 1-(2-carboxyphenylamino)-1-deoxy-D-ribulose 5-phosphate. It participates in amino-acid biosynthesis; L-tryptophan biosynthesis; L-tryptophan from chorismate: step 3/5. This chain is N-(5'-phosphoribosyl)anthranilate isomerase, found in Pseudomonas fluorescens (strain ATCC BAA-477 / NRRL B-23932 / Pf-5).